The following is a 314-amino-acid chain: Ficolin-2 (314 aa).

Positions 1–17 (MALGSAALFVLTLTVHA) are cleaved as a signal peptide. The 57-residue stretch at 40-96 (GCPGLPGAAGPKGEAGAKGDRGESGLPGIPGKEGPTGPKGNQGEKGIRGEKGDSGPS) folds into the Collagen-like domain. Positions 49–101 (GPKGEAGAKGDRGESGLPGIPGKEGPTGPKGNQGEKGIRGEKGDSGPSQSCAT) are disordered. The Fibrinogen C-terminal domain maps to 97–314 (QSCATGPRTC…KVSEMKVRLI (218 aa)). 2 disulfides stabilise this stretch: C99-C127 and C106-C134. Ca(2+) contacts are provided by D250, D252, S254, and S256. An intrachain disulfide couples C258 to C271. A glycan (N-linked (GlcNAc...) asparagine) is linked at N301.

The protein belongs to the ficolin lectin family. In terms of assembly, homotrimer. Interacts with elastin. Interacts with MASP1 and MASP2.

The protein resides in the secreted. Its function is as follows. May function in innate immunity through activation of the lectin complement pathway. Calcium-dependent and GlcNAc-binding lectin. This chain is Ficolin-2 (Fcn2), found in Mus musculus (Mouse).